Consider the following 561-residue polypeptide: Urocanate hydratase (561 aa).

NAD(+) is bound by residues 52 to 53 (GG), Gln-130, 176 to 178 (GMG), Glu-196, Arg-201, 242 to 243 (NA), 263 to 267 (QTSAH), 273 to 274 (YL), and Tyr-322. The active site involves Cys-410. Residue Gly-492 participates in NAD(+) binding.

It belongs to the urocanase family. The cofactor is NAD(+).

Its subcellular location is the cytoplasm. It catalyses the reaction 4-imidazolone-5-propanoate = trans-urocanate + H2O. It functions in the pathway amino-acid degradation; L-histidine degradation into L-glutamate; N-formimidoyl-L-glutamate from L-histidine: step 2/3. Catalyzes the conversion of urocanate to 4-imidazolone-5-propionate. The chain is Urocanate hydratase from Salmonella agona (strain SL483).